The sequence spans 34 residues: Antimicrobial peptide Alo-1 (34 aa).

3 disulfides stabilise this stretch: Cys-1–Cys-18, Cys-8–Cys-22, and Cys-17–Cys-33.

The protein resides in the secreted. Its function is as follows. Has antifungal activity against C.glabrata. This Acrocinus longimanus (Giant harlequin beetle) protein is Antimicrobial peptide Alo-1.